We begin with the raw amino-acid sequence, 185 residues long: Ribosome-recycling factor (185 aa).

This sequence belongs to the RRF family.

It is found in the cytoplasm. Its function is as follows. Responsible for the release of ribosomes from messenger RNA at the termination of protein biosynthesis. May increase the efficiency of translation by recycling ribosomes from one round of translation to another. The polypeptide is Ribosome-recycling factor (Roseiflexus castenholzii (strain DSM 13941 / HLO8)).